We begin with the raw amino-acid sequence, 225 residues long: C-reactive protein (225 aa).

The first 19 residues, 1-19, serve as a signal peptide directing secretion; sequence MEKLLWCLLIMISFSRTFG. Residues 24–225 form the Pentraxin (PTX) domain; the sequence is FKKAFVFPKE…DVFIKPQLWS (202 aa). Cysteine 55 and cysteine 116 form a disulfide bridge. The Ca(2+) site is built by asparagine 80, glutamate 157, glutamine 158, aspartate 159, and glutamine 169.

This sequence belongs to the pentraxin family. In terms of assembly, homopentamer. Pentraxin (or pentaxin) have a discoid arrangement of 5 non-covalently bound subunits. Interacts with FCN1; may regulate monocyte activation by FCN1. The cofactor is Ca(2+). Found in plasma.

The protein resides in the secreted. In terms of biological role, displays several functions associated with host defense: it promotes agglutination, bacterial capsular swelling, phagocytosis and complement fixation through its calcium-dependent binding to phosphorylcholine. Can interact with DNA and histones and may scavenge nuclear material released from damaged circulating cells. This is C-reactive protein (Crp) from Mus musculus (Mouse).